Here is a 225-residue protein sequence, read N- to C-terminus: GTP cyclohydrolase III (225 aa).

Belongs to the archaeal-type GTP cyclohydrolase family.

It catalyses the reaction GTP + 3 H2O = 2-amino-5-formylamino-6-(5-phospho-D-ribosylamino)pyrimidin-4(3H)-one + 2 phosphate + 2 H(+). Its function is as follows. Catalyzes the formation of 2-amino-5-formylamino-6-ribofuranosylamino-4(3H)-pyrimidinone ribonucleotide monophosphate and inorganic phosphate from GTP. Also has an independent pyrophosphate phosphohydrolase activity. The polypeptide is GTP cyclohydrolase III (Sulfurisphaera tokodaii (strain DSM 16993 / JCM 10545 / NBRC 100140 / 7) (Sulfolobus tokodaii)).